Consider the following 248-residue polypeptide: Tyrosine recombinase XerD-like (248 aa).

The Core-binding (CB) domain occupies 1 to 72 (MKSYIEPFIA…TANQFLYYLY (72 aa)). One can recognise a Tyr recombinase domain in the interval 85–248 (DTMKVMRTEK…PVTLEKYYKS (164 aa)). Residues lysine 149 and arginine 213 contribute to the active site. Residue tyrosine 245 is the O-(3'-phospho-DNA)-tyrosine intermediate of the active site.

The protein belongs to the 'phage' integrase family. XerD-like subfamily.

The protein resides in the cytoplasm. Functionally, putative tyrosine recombinase. Not involved in the cutting and rejoining of the recombining DNA molecules on dif(SL) site. The sequence is that of Tyrosine recombinase XerD-like from Streptococcus pyogenes serotype M3 (strain ATCC BAA-595 / MGAS315).